The following is a 178-amino-acid chain: Large ribosomal subunit protein uL6 (178 aa).

It belongs to the universal ribosomal protein uL6 family. As to quaternary structure, part of the 50S ribosomal subunit.

Functionally, this protein binds to the 23S rRNA, and is important in its secondary structure. It is located near the subunit interface in the base of the L7/L12 stalk, and near the tRNA binding site of the peptidyltransferase center. The chain is Large ribosomal subunit protein uL6 from Francisella tularensis subsp. holarctica (strain FTNF002-00 / FTA).